Consider the following 869-residue polypeptide: Facilitated trehalose transporter Tret1 (869 aa).

2 disordered regions span residues 1–214 (MSGR…QKAT) and 258–315 (KESS…LIHR). The Cytoplasmic segment spans residues 1–404 (MSGRDNRGAG…VYRPTTNPIY (404 aa)). A compositionally biased stretch (basic and acidic residues) spans 25–43 (KLKEKLTRAGDDQGYHRVE). Low complexity-rich tracts occupy residues 44–57 (SNLSTSNTATSLDT), 79–92 (PQQQQQQQQRQQLR), and 118–127 (PFQQQQQRTP). Basic and acidic residues-rich tracts occupy residues 147–156 (EIREHRDRQQ) and 258–291 (KESSSEEEFHKTRREFQGRKHQSLDPRVTFKLDK). Ser260, Ser261, Ser262, Ser332, and Ser334 each carry phosphoserine. A disordered region spans residues 336-368 (EDFHTSRQHFQQQRSISTDSRKSRRPYEMDEMG). The span at 343–353 (QHFQQQRSIST) shows a compositional bias: polar residues. Basic and acidic residues predominate over residues 354–368 (DSRKSRRPYEMDEMG). The chain crosses the membrane as a helical span at residues 405 to 425 (IWTQVLAALSVSLGSLVVGFV). At 426-452 (SAYTSPALVSMTNRNMTSFEVTPQAAS) the chain is on the extracellular side. Asn440 is a glycosylation site (N-linked (GlcNAc...) asparagine). The chain crosses the membrane as a helical span at residues 453–473 (WVGGIMPLAGLAGGIAGGPFI). Topologically, residues 474–485 (EYLGRRNTILAT) are cytoplasmic. Residues 486–506 (AIPFIVSSLLIACAVNVAMVL) traverse the membrane as a helical segment. The Extracellular portion of the chain corresponds to 507-509 (AGR). The chain crosses the membrane as a helical span at residues 510–530 (FLAGFCVGIASLSLPVYLGET). Over 531–536 (VQPEVR) the chain is Cytoplasmic. The helical transmembrane segment at 537–557 (GTLGLLPTAFGNIGILLCFVA) threads the bilayer. Topologically, residues 558 to 564 (GTYMDWS) are extracellular. Residues 565–585 (MLAFLGAALPVPFLILMFLIP) form a helical membrane-spanning segment. Over 586-654 (ETPRWFVSRG…NLKPLSISLG (69 aa)) the chain is Cytoplasmic. Residues 655-675 (LMFFQQLSGINAVIFYTVSIF) form a helical membrane-spanning segment. At 676-685 (KDAGSTIDGN) the chain is on the extracellular side. The chain crosses the membrane as a helical span at residues 686 to 706 (LCTIIVGIVNFMATFIATLLI). Over 707–712 (DRAGRK) the chain is Cytoplasmic. The chain crosses the membrane as a helical span at residues 713-733 (ILLYVSNIAMIITLFVLGGFF). Over 734-752 (YCKSHGQDVSQLGWLPLSC) the chain is Extracellular. A helical membrane pass occupies residues 753-773 (FVIYILGFSLGFGPIPWLMMG). Residues 774–779 (EILPSK) are Cytoplasmic-facing. The helical transmembrane segment at 780-800 (IRGSAASVATAFNWSCTFVVT) threads the bilayer. At 801 to 813 (KTFQDMIDFMGAH) the chain is on the extracellular side. The chain crosses the membrane as a helical span at residues 814-834 (GAFWLFGSICFIGLFFVILYV). The Cytoplasmic portion of the chain corresponds to 835 to 869 (PETQGKTLEDIERKMMGRVRRMSSVANMKPLAFNM). Ser857 and Ser858 each carry phosphoserine.

It belongs to the major facilitator superfamily. Sugar transporter (TC 2.A.1.1) family. Trehalose transporter subfamily.

Its subcellular location is the cell membrane. Its function is as follows. Low-capacity facilitative transporter for trehalose. Does not transport maltose, sucrose or lactose. Mediates the bidirectional transfer of trehalose. Responsible for the transport of trehalose synthesized in the fat body and the incorporation of trehalose into other tissues that require a carbon source, thereby regulating trehalose levels in the hemolymph. The polypeptide is Facilitated trehalose transporter Tret1 (Drosophila persimilis (Fruit fly)).